Here is a 262-residue protein sequence, read N- to C-terminus: tRNA pseudouridine synthase A (262 aa).

Aspartate 52 functions as the Nucleophile in the catalytic mechanism. Position 103 (tyrosine 103) interacts with substrate.

It belongs to the tRNA pseudouridine synthase TruA family.

It carries out the reaction uridine(38/39/40) in tRNA = pseudouridine(38/39/40) in tRNA. In terms of biological role, formation of pseudouridine at positions 38, 39 and 40 in the anticodon stem and loop of transfer RNAs. The polypeptide is tRNA pseudouridine synthase A (Methanococcus maripaludis (strain C6 / ATCC BAA-1332)).